The chain runs to 658 residues: Glycogen debranching enzyme (658 aa).

The active-site Nucleophile is aspartate 336. The Proton donor role is filled by glutamate 371. The interval 459–483 (EANGEENRDGTNSNYSDNHGKEGLG) is disordered.

This sequence belongs to the glycosyl hydrolase 13 family.

The catalysed reaction is Hydrolysis of (1-&gt;6)-alpha-D-glucosidic linkages to branches with degrees of polymerization of three or four glucose residues in limit dextrin.. Its pathway is glycan degradation; glycogen degradation. In terms of biological role, removes maltotriose and maltotetraose chains that are attached by 1,6-alpha-linkage to the limit dextrin main chain, generating a debranched limit dextrin. This Salmonella agona (strain SL483) protein is Glycogen debranching enzyme.